The sequence spans 366 residues: 3-dehydroquinate synthase (366 aa).

NAD(+) contacts are provided by residues 75-80 (DGEEYK), 109-113 (GVVGD), 133-134 (TT), Lys-146, Lys-155, and 173-176 (TLDT). Residues Glu-188, His-251, and His-268 each contribute to the Zn(2+) site.

This sequence belongs to the sugar phosphate cyclases superfamily. Dehydroquinate synthase family. It depends on Co(2+) as a cofactor. Zn(2+) is required as a cofactor. NAD(+) serves as cofactor.

The protein localises to the cytoplasm. It carries out the reaction 7-phospho-2-dehydro-3-deoxy-D-arabino-heptonate = 3-dehydroquinate + phosphate. Its pathway is metabolic intermediate biosynthesis; chorismate biosynthesis; chorismate from D-erythrose 4-phosphate and phosphoenolpyruvate: step 2/7. Its function is as follows. Catalyzes the conversion of 3-deoxy-D-arabino-heptulosonate 7-phosphate (DAHP) to dehydroquinate (DHQ). The polypeptide is 3-dehydroquinate synthase (Nitrosospira multiformis (strain ATCC 25196 / NCIMB 11849 / C 71)).